Here is a 181-residue protein sequence, read N- to C-terminus: Protein Syd (181 aa).

It belongs to the Syd family.

Its subcellular location is the cell inner membrane. Functionally, interacts with the SecY protein in vivo. May bind preferentially to an uncomplexed state of SecY, thus functioning either as a chelating agent for excess SecY in the cell or as a regulatory factor that negatively controls the translocase function. The sequence is that of Protein Syd from Citrobacter koseri (strain ATCC BAA-895 / CDC 4225-83 / SGSC4696).